The primary structure comprises 456 residues: MFS-type transporter SLC18B1 (456 aa).

The residue at position 1 (methionine 1) is an N-acetylmethionine. Residues 1–24 (MEALGDLEGPRAPGGDDPAGSAGE) form a disordered region. Residues 1–33 (MEALGDLEGPRAPGGDDPAGSAGETPGWLSREQ) are Cytoplasmic-facing. Residues 10 to 23 (PRAPGGDDPAGSAG) are compositionally biased toward low complexity. Residue serine 21 is modified to Phosphoserine. Residues 34-54 (VFVLISAASVNLGSMMCYSIL) form a helical membrane-spanning segment. Residues 55–70 (GPFFPKEAEKKGASNT) are Extracellular-facing. Residues 71 to 91 (IIGMIFGCFALFELLASLVFG) form a helical membrane-spanning segment. Topologically, residues 92 to 100 (NYLVHIGAK) are cytoplasmic. The helical transmembrane segment at 101 to 121 (FMFVAGMFVSGGVTILFGVLD) threads the bilayer. Residues 122–127 (RVPDGP) are Extracellular-facing. The chain crosses the membrane as a helical span at residues 128-148 (VFIAMCFLVRVMDAVSFAAAM). At 149–161 (TASSSILAKAFPN) the chain is on the cytoplasmic side. The chain crosses the membrane as a helical span at residues 162-184 (NVATVLGSLETFSGLGLILGPPV). Topologically, residues 185-195 (GGFLYQSFGYE) are extracellular. The chain crosses the membrane as a helical span at residues 196–216 (VPFIVLGCVVLLMVPLNMYIL). Over 217-230 (PNYESDPGEHSFWK) the chain is Cytoplasmic. The chain crosses the membrane as a helical span at residues 231–251 (LIALPKVGLIAFVINSLSSCF). Residues 252-272 (GFLDPTLSLFVLEKFNLPAGY) lie on the Extracellular side of the membrane. The helical transmembrane segment at 273-293 (VGLVFLGMALSYAISSPLFGL) threads the bilayer. Over 294-304 (LSDKRPPLRKW) the chain is Cytoplasmic. A helical transmembrane segment spans residues 305 to 325 (LLVFGNLITAGCYMLLGPVPI). Residues 326–331 (LHIKSQ) lie on the Extracellular side of the membrane. The chain crosses the membrane as a helical span at residues 332-352 (LWLLVLILVVSGLSAGMSIIP). At 353–377 (TFPEILSCAHENGFEEGLSTLGLVS) the chain is on the cytoplasmic side. Residues 378–398 (GLFSAMWSIGAFMGPTLGGFL) form a helical membrane-spanning segment. Topologically, residues 399 to 407 (YEKIGFEWA) are extracellular. A helical transmembrane segment spans residues 408–428 (AAIQGLWALISGLAMGLFYLL). Topologically, residues 429–456 (EYSRRKRSKSQNILSTEEERTTLLPNET) are cytoplasmic. Serine 438 is modified (phosphoserine).

It belongs to the major facilitator superfamily. In terms of tissue distribution, expressed in various tissues including lung, placenta, adrenal gland, liver, testis, and brain.

Its subcellular location is the cytoplasmic vesicle. It is found in the secretory vesicle membrane. It localises to the secretory vesicle. The protein localises to the synaptic vesicle membrane. It catalyses the reaction spermine(in) + n H(+)(out) = spermine(out) + n H(+)(in). The enzyme catalyses spermidine(in) + n H(+)(out) = spermidine(out) + n H(+)(in). The catalysed reaction is serotonin(in) + n H(+)(out) = serotonin(out) + n H(+)(in). Its function is as follows. Proton-coupled polyamine antiporter involved in the translocation of polyamines from cytosol into secretory vesicles prior to their release via exocytosis. Uses the electrochemical proton gradient generated by a V-type proton-pumping ATPase to couple the efflux of protons with the uptake of a polyamine molecule. Facilitates vesicular storage of spermine and spermidine in astrocytes with an impact on glutamatergic neuronal transmission and memory formation. Upon antigen stimulation, regulates polyamine accumulation and release in mast cell secretory granules, which in turn potentiates mast cell degranulation and histamine secretion. This Homo sapiens (Human) protein is MFS-type transporter SLC18B1.